We begin with the raw amino-acid sequence, 338 residues long: Activator of 90 kDa heat shock protein ATPase homolog 1 (338 aa).

Residue K3 is modified to N6-acetyllysine. K182 participates in a covalent cross-link: Glycyl lysine isopeptide (Lys-Gly) (interchain with G-Cter in SUMO1). S193 carries the post-translational modification Phosphoserine. A Glycyl lysine isopeptide (Lys-Gly) (interchain with G-Cter in SUMO2) cross-link involves residue K203. K212 carries the post-translational modification N6-acetyllysine. Position 223 is a phosphotyrosine; by ABL (Y223). Residue S258 is modified to Phosphoserine.

It belongs to the AHA1 family. In terms of assembly, interacts with HSPCA/HSP90. Interacts (phosphorylated on Tyr-223) with HSP90AA1; the interaction activates HSP90AA1 ATPase activity. Interacts with HSP90AB1. Interacts with GCH1. Interacts with SRPK1. Interacts with FLCN. (Microbial infection) Interacts with vesicular stomatitis virus glycoprotein (VSV G) (via cytoplasmic tail). Phosphorylation at Tyr-223 enhances binding to chaperone HSP90AA1. As to expression, expressed in numerous tissues, including brain, heart, skeletal muscle and kidney and, at lower levels, liver and placenta.

It is found in the cytoplasm. The protein localises to the cytosol. Its subcellular location is the endoplasmic reticulum. Acts as a co-chaperone of HSP90AA1. Activates the ATPase activity of HSP90AA1 leading to increase in its chaperone activity. Competes with the inhibitory co-chaperone FNIP1 for binding to HSP90AA1, thereby providing a reciprocal regulatory mechanism for chaperoning of client proteins. Competes with the inhibitory co-chaperone TSC1 for binding to HSP90AA1, thereby providing a reciprocal regulatory mechanism for chaperoning of client proteins. The protein is Activator of 90 kDa heat shock protein ATPase homolog 1 (AHSA1) of Homo sapiens (Human).